Consider the following 363-residue polypeptide: Flagellar P-ring protein (363 aa).

An N-terminal signal peptide occupies residues M1–A20.

It belongs to the FlgI family. In terms of assembly, the basal body constitutes a major portion of the flagellar organelle and consists of four rings (L,P,S, and M) mounted on a central rod.

The protein localises to the periplasm. It localises to the bacterial flagellum basal body. In terms of biological role, assembles around the rod to form the L-ring and probably protects the motor/basal body from shearing forces during rotation. This is Flagellar P-ring protein from Shewanella sp. (strain MR-7).